An 857-amino-acid polypeptide reads, in one-letter code: DNA mismatch repair protein MutS (857 aa).

Residue 608 to 615 coordinates ATP; the sequence is GPNMSGKS.

This sequence belongs to the DNA mismatch repair MutS family.

Its function is as follows. This protein is involved in the repair of mismatches in DNA. It is possible that it carries out the mismatch recognition step. This protein has a weak ATPase activity. The chain is DNA mismatch repair protein MutS from Lactobacillus johnsonii (strain CNCM I-12250 / La1 / NCC 533).